Reading from the N-terminus, the 417-residue chain is Serine hydroxymethyltransferase (417 aa).

(6S)-5,6,7,8-tetrahydrofolate-binding positions include Leu120 and 124 to 126 (GHL). N6-(pyridoxal phosphate)lysine is present on Lys229.

The protein belongs to the SHMT family. Homodimer. The cofactor is pyridoxal 5'-phosphate.

The protein resides in the cytoplasm. The enzyme catalyses (6R)-5,10-methylene-5,6,7,8-tetrahydrofolate + glycine + H2O = (6S)-5,6,7,8-tetrahydrofolate + L-serine. Its pathway is one-carbon metabolism; tetrahydrofolate interconversion. It functions in the pathway amino-acid biosynthesis; glycine biosynthesis; glycine from L-serine: step 1/1. Its function is as follows. Catalyzes the reversible interconversion of serine and glycine with tetrahydrofolate (THF) serving as the one-carbon carrier. This reaction serves as the major source of one-carbon groups required for the biosynthesis of purines, thymidylate, methionine, and other important biomolecules. Also exhibits THF-independent aldolase activity toward beta-hydroxyamino acids, producing glycine and aldehydes, via a retro-aldol mechanism. The protein is Serine hydroxymethyltransferase of Anaeromyxobacter sp. (strain Fw109-5).